Here is a 284-residue protein sequence, read N- to C-terminus: Urease accessory protein UreD (284 aa).

Residues 1–28 (MQSEQQAIGASGCEDAQQPVRQQRARGR) form a disordered region.

This sequence belongs to the UreD family. As to quaternary structure, ureD, UreF and UreG form a complex that acts as a GTP-hydrolysis-dependent molecular chaperone, activating the urease apoprotein by helping to assemble the nickel containing metallocenter of UreC. The UreE protein probably delivers the nickel.

It is found in the cytoplasm. Required for maturation of urease via the functional incorporation of the urease nickel metallocenter. The chain is Urease accessory protein UreD from Agrobacterium fabrum (strain C58 / ATCC 33970) (Agrobacterium tumefaciens (strain C58)).